A 307-amino-acid chain; its full sequence is Methionyl-tRNA formyltransferase (307 aa).

110-113 (SLLP) lines the (6S)-5,6,7,8-tetrahydrofolate pocket.

Belongs to the Fmt family.

It catalyses the reaction L-methionyl-tRNA(fMet) + (6R)-10-formyltetrahydrofolate = N-formyl-L-methionyl-tRNA(fMet) + (6S)-5,6,7,8-tetrahydrofolate + H(+). Functionally, attaches a formyl group to the free amino group of methionyl-tRNA(fMet). The formyl group appears to play a dual role in the initiator identity of N-formylmethionyl-tRNA by promoting its recognition by IF2 and preventing the misappropriation of this tRNA by the elongation apparatus. In Chromobacterium violaceum (strain ATCC 12472 / DSM 30191 / JCM 1249 / CCUG 213 / NBRC 12614 / NCIMB 9131 / NCTC 9757 / MK), this protein is Methionyl-tRNA formyltransferase.